The primary structure comprises 342 residues: Protein-glutamate methylesterase/protein-glutamine glutaminase 1 (342 aa).

The Response regulatory domain occupies 2-119; that stretch reads RVAIVNDMPL…GDPKAAAQRL (118 aa). Aspartate 53 carries the post-translational modification 4-aspartylphosphate. The CheB-type methylesterase domain maps to 146 to 329; it reads SDTDAALVVI…LPLGDIAPRL (184 aa). Catalysis depends on residues serine 158, histidine 185, and aspartate 278.

This sequence belongs to the CheB family. In terms of processing, phosphorylated by CheA. Phosphorylation of the N-terminal regulatory domain activates the methylesterase activity.

The protein resides in the cytoplasm. It catalyses the reaction [protein]-L-glutamate 5-O-methyl ester + H2O = L-glutamyl-[protein] + methanol + H(+). It carries out the reaction L-glutaminyl-[protein] + H2O = L-glutamyl-[protein] + NH4(+). Involved in chemotaxis. Part of a chemotaxis signal transduction system that modulates chemotaxis in response to various stimuli. Catalyzes the demethylation of specific methylglutamate residues introduced into the chemoreceptors (methyl-accepting chemotaxis proteins or MCP) by CheR. Also mediates the irreversible deamidation of specific glutamine residues to glutamic acid. This Bordetella avium (strain 197N) protein is Protein-glutamate methylesterase/protein-glutamine glutaminase 1.